The primary structure comprises 474 residues: Trifunctional enzyme subunit beta, mitochondrial (474 aa).

The N-terminal 33 residues, 1-33, are a transit peptide targeting the mitochondrion; that stretch reads MTILTYPFKNLPTASKWALRFSIRPLSCSSQLR. An N6-acetyllysine; alternate modification is found at lysine 72. Residue lysine 72 is modified to N6-succinyllysine; alternate. The active-site Acyl-thioester intermediate is cysteine 138. The stretch at 173–220 is an intramembrane region; the sequence is IRHSRKMRKLMLDLNKAKSMGQRLSLISKFRFNFLAPELPAVSEFSTS. Lysine 188 bears the N6-acetyllysine; alternate mark. Lysine 188 carries the N6-succinyllysine; alternate modification. An N6-succinyllysine mark is found at lysine 190, lysine 272, and lysine 291. Lysine 293 is modified (N6-acetyllysine; alternate). An N6-succinyllysine; alternate modification is found at lysine 293. Residue lysine 298 is modified to N6-acetyllysine. Lysine 332 carries the N6-acetyllysine; alternate modification. An N6-succinyllysine; alternate modification is found at lysine 332. Lysine 348 and lysine 361 each carry N6-acetyllysine. The active-site Proton donor/acceptor is the cysteine 458.

This sequence belongs to the thiolase-like superfamily. Thiolase family. Heterotetramer of 2 alpha/HADHA and 2 beta/HADHB subunits; forms the mitochondrial trifunctional enzyme. Also purified as higher order heterooligomers including a 4 alpha/HADHA and 4 beta/HADHB heterooligomer which physiological significance remains unclear. The mitochondrial trifunctional enzyme interacts with MTLN. Interacts with RSAD2/viperin.

Its subcellular location is the mitochondrion. The protein resides in the mitochondrion inner membrane. The protein localises to the mitochondrion outer membrane. It is found in the endoplasmic reticulum. The enzyme catalyses an acyl-CoA + acetyl-CoA = a 3-oxoacyl-CoA + CoA. It catalyses the reaction butanoyl-CoA + acetyl-CoA = 3-oxohexanoyl-CoA + CoA. It carries out the reaction hexanoyl-CoA + acetyl-CoA = 3-oxooctanoyl-CoA + CoA. The catalysed reaction is octanoyl-CoA + acetyl-CoA = 3-oxodecanoyl-CoA + CoA. The enzyme catalyses decanoyl-CoA + acetyl-CoA = 3-oxododecanoyl-CoA + CoA. It catalyses the reaction dodecanoyl-CoA + acetyl-CoA = 3-oxotetradecanoyl-CoA + CoA. It carries out the reaction tetradecanoyl-CoA + acetyl-CoA = 3-oxohexadecanoyl-CoA + CoA. Its pathway is lipid metabolism; fatty acid beta-oxidation. Mitochondrial trifunctional enzyme catalyzes the last three of the four reactions of the mitochondrial beta-oxidation pathway. The mitochondrial beta-oxidation pathway is the major energy-producing process in tissues and is performed through four consecutive reactions breaking down fatty acids into acetyl-CoA. Among the enzymes involved in this pathway, the trifunctional enzyme exhibits specificity for long-chain fatty acids. Mitochondrial trifunctional enzyme is a heterotetrameric complex composed of two proteins, the trifunctional enzyme subunit alpha/HADHA carries the 2,3-enoyl-CoA hydratase and the 3-hydroxyacyl-CoA dehydrogenase activities, while the trifunctional enzyme subunit beta/HADHB described here bears the 3-ketoacyl-CoA thiolase activity. The sequence is that of Trifunctional enzyme subunit beta, mitochondrial (HADHB) from Homo sapiens (Human).